A 118-amino-acid polypeptide reads, in one-letter code: Small integral membrane protein 17 (118 aa).

Positions 1-84 are disordered; that stretch reads MQSLRPEQTR…DDESEGSQGF (84 aa). The span at 13–42 shows a compositional bias: basic and acidic residues; sequence LEPERTKTLLPRESRAWEKPPHPACTKDWE. A helical membrane pass occupies residues 96-116; it reads IVLVVCVLFLFLVLTGMPMMF.

It localises to the membrane. The sequence is that of Small integral membrane protein 17 (SMIM17) from Homo sapiens (Human).